The following is a 336-amino-acid chain: Anthranilate phosphoribosyltransferase (336 aa).

Residues Gly-82, 85–86, Thr-90, 92–95, 110–118, and Ser-122 contribute to the 5-phospho-alpha-D-ribose 1-diphosphate site; these read GD, NIST, and KHGNRSVSS. An anthranilate-binding site is contributed by Gly-82. Residue Ser-94 participates in Mg(2+) binding. Residue Asn-113 coordinates anthranilate. Anthranilate is bound at residue Arg-168. Residues Asp-227 and Glu-228 each coordinate Mg(2+).

This sequence belongs to the anthranilate phosphoribosyltransferase family. In terms of assembly, homodimer. The cofactor is Mg(2+).

It carries out the reaction N-(5-phospho-beta-D-ribosyl)anthranilate + diphosphate = 5-phospho-alpha-D-ribose 1-diphosphate + anthranilate. It functions in the pathway amino-acid biosynthesis; L-tryptophan biosynthesis; L-tryptophan from chorismate: step 2/5. Functionally, catalyzes the transfer of the phosphoribosyl group of 5-phosphorylribose-1-pyrophosphate (PRPP) to anthranilate to yield N-(5'-phosphoribosyl)-anthranilate (PRA). In Leptospira interrogans serogroup Icterohaemorrhagiae serovar copenhageni (strain Fiocruz L1-130), this protein is Anthranilate phosphoribosyltransferase.